Here is a 55-residue protein sequence, read N- to C-terminus: Protein CADMIUM TOLERANCE 2 (55 aa).

A helical membrane pass occupies residues 24-40 (GCLYACIFTALCCFCCY).

Belongs to the CYSTM1 family. In terms of tissue distribution, expressed only in roots.

It localises to the cell membrane. The protein localises to the secreted. The protein resides in the cell wall. Functionally, confers resistance to heavy metal ions (e.g. cadmium (CdCl(2)) and copper (CuCl(2))) by chelating them at the plasma membrane of root cells, thus stopping their entry and reducing their accumulation. The protein is Protein CADMIUM TOLERANCE 2 of Oryza sativa subsp. japonica (Rice).